A 506-amino-acid chain; its full sequence is Chromodomain Y-like protein 2 (506 aa).

The Chromo domain maps to 7 to 67 (YEVERIVDKR…LHMSKDKRIK (61 aa)). The disordered stretch occupies residues 64 to 177 (KRIKSGKQSS…RHFGNGSHQP (114 aa)). Basic and acidic residues predominate over residues 88-98 (KLSHRPSDPGK). Over residues 101–120 (GTSHKRKRINPPLAKPKKGY) the composition is skewed to basic residues. Residues 133–143 (KTVSYRTTPSG) show a composition bias toward polar residues.

Interacts (via chromo domain) with histone H3K9me3. Ubiquitously expressed.

Its subcellular location is the nucleus. The polypeptide is Chromodomain Y-like protein 2 (CDYL2) (Homo sapiens (Human)).